The primary structure comprises 629 residues: MPIRILSPQLANQIAAGEVVERPASVVKELVENSLDAGANKIQIDIENGGANLIRIRDNGCGIPKEELSLALARHATSKIADLDDLEAILSLGFRGEALASISSVSRLTLTSRTEEQTEAWQVYAQGRDMETTIKPASHPVGTTVEVANLFFNTPARRKFLRTDKTEFAHIDEVIRRIALTKFNTAFTLTHNGKIVRQYRPAFDLNQQLKRVAVICGDDFVKNALRIDWKHDDLHLSGWVATPNFSRTQNDLSYCYINGRMVRDKVISHAIRQAYAQYLPTDAYPAFVLFIDLNPHDVDVNVHPTKHEVRFHQQRLIHDFIYEGISYALNNQEQLNWHTEQSAVENHEENTVREPQPNYSIRPNRAAAGQNSFAPQYHEKPQQNQPHFSNTPVLPNHVSTGYRDYRSDAPSKTEQRLYAELLRTLPPTAQKDISNTAQQNISDTAKIISTEIIECSSHLRALSLIENRALLLQQNQDFFLLSLEKLQRLQWQLALQQIQIEQQPLLIPIVFRLTEAQFQAWQQYSDNFKKIGFEFIENQAQLRLTLNKVPNVLRTQNLQKCVMAMLTRDENSSPFLTALCAQLECKTFDALADALNLLSETERLLTQTNRTAFTQLLKPVNWQPLLDEI.

The segment at 376 to 396 is disordered; sequence QYHEKPQQNQPHFSNTPVLPN. Over residues 382–396 the composition is skewed to polar residues; it reads QQNQPHFSNTPVLPN.

It belongs to the DNA mismatch repair MutL/HexB family.

This protein is involved in the repair of mismatches in DNA. It is required for dam-dependent methyl-directed DNA mismatch repair. May act as a 'molecular matchmaker', a protein that promotes the formation of a stable complex between two or more DNA-binding proteins in an ATP-dependent manner without itself being part of a final effector complex. The protein is DNA mismatch repair protein MutL of Haemophilus influenzae (strain PittEE).